Here is a 253-residue protein sequence, read N- to C-terminus: Imidazole glycerol phosphate synthase subunit HisF (253 aa).

Active-site residues include aspartate 11 and aspartate 130.

Belongs to the HisA/HisF family. In terms of assembly, heterodimer of HisH and HisF.

Its subcellular location is the cytoplasm. It catalyses the reaction 5-[(5-phospho-1-deoxy-D-ribulos-1-ylimino)methylamino]-1-(5-phospho-beta-D-ribosyl)imidazole-4-carboxamide + L-glutamine = D-erythro-1-(imidazol-4-yl)glycerol 3-phosphate + 5-amino-1-(5-phospho-beta-D-ribosyl)imidazole-4-carboxamide + L-glutamate + H(+). It functions in the pathway amino-acid biosynthesis; L-histidine biosynthesis; L-histidine from 5-phospho-alpha-D-ribose 1-diphosphate: step 5/9. Functionally, IGPS catalyzes the conversion of PRFAR and glutamine to IGP, AICAR and glutamate. The HisF subunit catalyzes the cyclization activity that produces IGP and AICAR from PRFAR using the ammonia provided by the HisH subunit. In Dehalococcoides mccartyi (strain ATCC BAA-2100 / JCM 16839 / KCTC 5957 / BAV1), this protein is Imidazole glycerol phosphate synthase subunit HisF.